A 259-amino-acid polypeptide reads, in one-letter code: Small ribosomal subunit protein uS2 (259 aa).

This sequence belongs to the universal ribosomal protein uS2 family.

In Streptococcus pneumoniae serotype 2 (strain D39 / NCTC 7466), this protein is Small ribosomal subunit protein uS2.